We begin with the raw amino-acid sequence, 365 residues long: 5-hydroxytryptamine receptor 1F (365 aa).

The Extracellular portion of the chain corresponds to 1 to 24 (MDFLNSSDQNLTSEELLNRMPSKI). N-linked (GlcNAc...) asparagine glycosylation is found at N5 and N10. A helical transmembrane segment spans residues 25-49 (LVSLTLSGLALMTTTINSLVIAAII). At 50-59 (VTRKLHHPAN) the chain is on the cytoplasmic side. Residues 60–81 (YLICSLAVTDFLVAVLVMPFSI) traverse the membrane as a helical segment. Residues 82-96 (VYIVRESWIMGQVVC) lie on the Extracellular side of the membrane. Residues C96 and C172 are joined by a disulfide bond. Residues 97–119 (DIWLSVDITCCTCSILHLSAIAL) traverse the membrane as a helical segment. Serotonin-binding residues include D103 and C107. The DRY motif; important for ligand-induced conformation changes motif lies at 120–122 (DRY). Residues 120–139 (DRYRAITDAVEYARKRTPKH) are Cytoplasmic-facing. The helical transmembrane segment at 140–159 (AGIMITIVWIISVFISMPPL) threads the bilayer. Over 160–178 (FWRHQGTSRDDECIIKHDH) the chain is Extracellular. Residues 179–202 (IVSTIYSTFGAFYIPLALILILYY) traverse the membrane as a helical segment. Over 203-291 (KIYRAAKTLY…KISGTRERKA (89 aa)) the chain is Cytoplasmic. The helical transmembrane segment at 292 to 315 (ATTLGLILGAFVICWLPFFVKELV) threads the bilayer. Residues 316–327 (VNVCDKCKISEE) are Extracellular-facing. Residues 328–350 (MSNFLAWLGYLNSLINPLIYTIF) traverse the membrane as a helical segment. The NPxxY motif; important for ligand-induced conformation changes and signaling signature appears at 343–347 (NPLIY). At 351–365 (NEDFKKAFQKLVRCR) the chain is on the cytoplasmic side.

It belongs to the G-protein coupled receptor 1 family.

Its subcellular location is the cell membrane. In terms of biological role, G-protein coupled receptor for 5-hydroxytryptamine (serotonin). Also functions as a receptor for various alkaloids and psychoactive substances. Ligand binding causes a conformation change that triggers signaling via guanine nucleotide-binding proteins (G proteins) and modulates the activity of downstream effectors, such as adenylate cyclase. HTR1F is coupled to G(i)/G(o) G alpha proteins and mediates inhibitory neurotransmission by inhibiting adenylate cyclase activity. The sequence is that of 5-hydroxytryptamine receptor 1F (HTR1F) from Pan troglodytes (Chimpanzee).